The chain runs to 239 residues: Insulin-like growth factor-binding protein 3 receptor (239 aa).

A signal peptide spans 1-38 (MGSCQAGHYLHFCLAHHPPLVCATLILLLLGLSGLGLG). Over 39–205 (GFLLTHRTDL…EELTLCGSRL (167 aa)) the chain is Extracellular. N-linked (GlcNAc...) asparagine glycans are attached at residues asparagine 101 and asparagine 167. The helical transmembrane segment at 206 to 226 (LVLGFFLILFCGLCCLTAACF) threads the bilayer. At 227-239 (HPRRESHWSRTRL) the chain is on the cytoplasmic side.

Interacts with IGFBP3. Interacts with CASP8.

Its subcellular location is the cell membrane. Cell death receptor specific for IGFBP3, may mediate caspase-8-dependent apoptosis upon ligand binding. The polypeptide is Insulin-like growth factor-binding protein 3 receptor (TMEM219) (Bos taurus (Bovine)).